Consider the following 153-residue polypeptide: Ribosome maturation factor RimP (153 aa).

Belongs to the RimP family.

The protein resides in the cytoplasm. Required for maturation of 30S ribosomal subunits. This Vesicomyosocius okutanii subsp. Calyptogena okutanii (strain HA) protein is Ribosome maturation factor RimP.